The following is a 131-amino-acid chain: Transcription antitermination protein NusB (131 aa).

The protein belongs to the NusB family.

Functionally, involved in transcription antitermination. Required for transcription of ribosomal RNA (rRNA) genes. Binds specifically to the boxA antiterminator sequence of the ribosomal RNA (rrn) operons. This Ligilactobacillus salivarius (strain UCC118) (Lactobacillus salivarius) protein is Transcription antitermination protein NusB.